The chain runs to 508 residues: Photosystem II CP47 reaction center protein (508 aa).

The next 6 helical transmembrane spans lie at 21-36 (SVHIMHTALVAGWAGS), 101-115 (IVFSGLCFLAAIWHW), 140-156 (GIHLFLAGVACFGFGAF), 203-218 (IAAGTLGILAGLFHLS), 237-252 (VLSSSIAAVFFAAFVV), and 457-472 (SFALLFFFGHIWHGAR).

Belongs to the PsbB/PsbC family. PsbB subfamily. As to quaternary structure, PSII is composed of 1 copy each of membrane proteins PsbA, PsbB, PsbC, PsbD, PsbE, PsbF, PsbH, PsbI, PsbJ, PsbK, PsbL, PsbM, PsbT, PsbX, PsbY, PsbZ, Psb30/Ycf12, at least 3 peripheral proteins of the oxygen-evolving complex and a large number of cofactors. It forms dimeric complexes. The cofactor is Binds multiple chlorophylls. PSII binds additional chlorophylls, carotenoids and specific lipids..

It localises to the plastid. Its subcellular location is the chloroplast thylakoid membrane. One of the components of the core complex of photosystem II (PSII). It binds chlorophyll and helps catalyze the primary light-induced photochemical processes of PSII. PSII is a light-driven water:plastoquinone oxidoreductase, using light energy to abstract electrons from H(2)O, generating O(2) and a proton gradient subsequently used for ATP formation. In Phaseolus vulgaris (Kidney bean), this protein is Photosystem II CP47 reaction center protein.